The primary structure comprises 246 residues: Sugar fermentation stimulation protein homolog (246 aa).

It belongs to the SfsA family.

This chain is Sugar fermentation stimulation protein homolog, found in Prochlorococcus marinus (strain MIT 9312).